The primary structure comprises 294 residues: ATP phosphoribosyltransferase (294 aa).

It belongs to the ATP phosphoribosyltransferase family. Long subfamily. Requires Mg(2+) as cofactor.

The protein resides in the cytoplasm. The catalysed reaction is 1-(5-phospho-beta-D-ribosyl)-ATP + diphosphate = 5-phospho-alpha-D-ribose 1-diphosphate + ATP. The protein operates within amino-acid biosynthesis; L-histidine biosynthesis; L-histidine from 5-phospho-alpha-D-ribose 1-diphosphate: step 1/9. Feedback inhibited by histidine. In terms of biological role, catalyzes the condensation of ATP and 5-phosphoribose 1-diphosphate to form N'-(5'-phosphoribosyl)-ATP (PR-ATP). Has a crucial role in the pathway because the rate of histidine biosynthesis seems to be controlled primarily by regulation of HisG enzymatic activity. The protein is ATP phosphoribosyltransferase of Pelodictyon phaeoclathratiforme (strain DSM 5477 / BU-1).